The sequence spans 134 residues: Large ribosomal subunit protein bL17 (134 aa).

It belongs to the bacterial ribosomal protein bL17 family. As to quaternary structure, part of the 50S ribosomal subunit. Contacts protein L32.

The sequence is that of Large ribosomal subunit protein bL17 from Colwellia psychrerythraea (strain 34H / ATCC BAA-681) (Vibrio psychroerythus).